Here is an 86-residue protein sequence, read N- to C-terminus: Small ribosomal subunit protein bS18 (86 aa).

This sequence belongs to the bacterial ribosomal protein bS18 family. In terms of assembly, part of the 30S ribosomal subunit. Forms a tight heterodimer with protein bS6.

Its function is as follows. Binds as a heterodimer with protein bS6 to the central domain of the 16S rRNA, where it helps stabilize the platform of the 30S subunit. The polypeptide is Small ribosomal subunit protein bS18 (Herpetosiphon aurantiacus (strain ATCC 23779 / DSM 785 / 114-95)).